A 418-amino-acid polypeptide reads, in one-letter code: Trimethyllysine dioxygenase, mitochondrial (418 aa).

The Fe cation site is built by His-239, Asp-241, and His-386.

This sequence belongs to the gamma-BBH/TMLD family. In terms of assembly, homodimer. It depends on Fe(2+) as a cofactor. Requires L-ascorbate as cofactor.

The protein resides in the mitochondrion matrix. The catalysed reaction is N(6),N(6),N(6)-trimethyl-L-lysine + 2-oxoglutarate + O2 = (3S)-3-hydroxy-N(6),N(6),N(6)-trimethyl-L-lysine + succinate + CO2. The protein operates within amine and polyamine biosynthesis; carnitine biosynthesis. In terms of biological role, converts trimethyllysine (TML) into hydroxytrimethyllysine (HTML). The sequence is that of Trimethyllysine dioxygenase, mitochondrial (TMLHE) from Gallus gallus (Chicken).